The primary structure comprises 301 residues: Ribonuclease H2 subunit A (301 aa).

Met-1 is modified (N-acetylmethionine). The RNase H type-2 domain maps to 28–251 (PCVLGVDEAG…AQAILEKEAE (224 aa)). 3 residues coordinate a divalent metal cation: Asp-34, Glu-35, and Asp-142. Thr-217 carries the post-translational modification Phosphothreonine. Ser-258 carries the phosphoserine modification.

It belongs to the RNase HII family. Eukaryotic subfamily. The RNase H2 complex is a heterotrimer composed of the catalytic subunit RNASEH2A and the non-catalytic subunits RNASEH2B and RNASEH2C. Mn(2+) is required as a cofactor. Mg(2+) serves as cofactor.

It localises to the nucleus. The enzyme catalyses Endonucleolytic cleavage to 5'-phosphomonoester.. In terms of biological role, catalytic subunit of RNase HII, an endonuclease that specifically degrades the RNA of RNA:DNA hybrids. Participates in DNA replication, possibly by mediating the removal of lagging-strand Okazaki fragment RNA primers during DNA replication. Mediates the excision of single ribonucleotides from DNA:RNA duplexes. The chain is Ribonuclease H2 subunit A (Rnaseh2a) from Rattus norvegicus (Rat).